The chain runs to 82 residues: DNA-directed RNA polymerase subunit Rpo5 (82 aa).

It belongs to the archaeal Rpo5/eukaryotic RPB5 RNA polymerase subunit family. Part of the RNA polymerase complex.

The protein resides in the cytoplasm. The catalysed reaction is RNA(n) + a ribonucleoside 5'-triphosphate = RNA(n+1) + diphosphate. Its function is as follows. DNA-dependent RNA polymerase (RNAP) catalyzes the transcription of DNA into RNA using the four ribonucleoside triphosphates as substrates. This Pyrococcus abyssi (strain GE5 / Orsay) protein is DNA-directed RNA polymerase subunit Rpo5.